The sequence spans 402 residues: S-adenosylmethionine synthase (402 aa).

H15 provides a ligand contact to ATP. D17 lines the Mg(2+) pocket. Residue E43 coordinates K(+). Positions 56 and 99 each coordinate L-methionine. The flexible loop stretch occupies residues 99 to 109 (QSPDIAQGVDT). ATP is bound by residues 174–176 (DGK), 247–248 (RF), D256, 262–263 (RK), A279, and K283. Position 256 (D256) interacts with L-methionine. K287 contacts L-methionine.

The protein belongs to the AdoMet synthase family. Homotetramer; dimer of dimers. Mg(2+) serves as cofactor. The cofactor is K(+).

The protein resides in the cytoplasm. The enzyme catalyses L-methionine + ATP + H2O = S-adenosyl-L-methionine + phosphate + diphosphate. Its pathway is amino-acid biosynthesis; S-adenosyl-L-methionine biosynthesis; S-adenosyl-L-methionine from L-methionine: step 1/1. Its function is as follows. Catalyzes the formation of S-adenosylmethionine (AdoMet) from methionine and ATP. The overall synthetic reaction is composed of two sequential steps, AdoMet formation and the subsequent tripolyphosphate hydrolysis which occurs prior to release of AdoMet from the enzyme. The chain is S-adenosylmethionine synthase from Streptomyces griseus subsp. griseus (strain JCM 4626 / CBS 651.72 / NBRC 13350 / KCC S-0626 / ISP 5235).